A 398-amino-acid chain; its full sequence is Tyrosine--tRNA ligase (398 aa).

A 'HIGH' region motif is present at residues 42–51 (PTAPDIHLGH). The 'KMSKS' region signature appears at 226–230 (KMSKS). K229 is an ATP binding site. In terms of domain architecture, S4 RNA-binding spans 336 to 397 (LAIANLLKDA…GKRKFAKVTL (62 aa)).

This sequence belongs to the class-I aminoacyl-tRNA synthetase family. TyrS type 2 subfamily. Homodimer.

It localises to the cytoplasm. The catalysed reaction is tRNA(Tyr) + L-tyrosine + ATP = L-tyrosyl-tRNA(Tyr) + AMP + diphosphate + H(+). Catalyzes the attachment of tyrosine to tRNA(Tyr) in a two-step reaction: tyrosine is first activated by ATP to form Tyr-AMP and then transferred to the acceptor end of tRNA(Tyr). The chain is Tyrosine--tRNA ligase from Shewanella oneidensis (strain ATCC 700550 / JCM 31522 / CIP 106686 / LMG 19005 / NCIMB 14063 / MR-1).